The following is a 591-amino-acid chain: Cytidine monophosphate-N-acetylneuraminic acid hydroxylase (591 aa).

Residues 16-114 (LASAEVESLK…IENDDENGVS (99 aa)) enclose the Rieske domain. Cys56, His58, Cys77, and His80 together coordinate [2Fe-2S] cluster.

The protein belongs to the CMP-Neu5Ac hydroxylase family. [2Fe-2S] cluster serves as cofactor.

The protein localises to the cytoplasm. The catalysed reaction is CMP-N-acetyl-beta-neuraminate + 2 Fe(II)-[cytochrome b5] + O2 + 2 H(+) = CMP-N-glycoloyl-beta-neuraminate + 2 Fe(III)-[cytochrome b5] + H2O. Its pathway is amino-sugar metabolism; N-acetylneuraminate metabolism. In terms of biological role, sialic acids are components of carbohydrate chains of glycoconjugates and are involved in cell-cell recognition and cell-pathogen interactions. Catalyzes the conversion of CMP-N-acetylneuraminic acid (CMP-Neu5Ac) into its hydroxylated derivative CMP-N-glycolylneuraminic acid (CMP-Neu5Gc), a sialic acid abundantly expressed at the surface of many cells. In Xenopus laevis (African clawed frog), this protein is Cytidine monophosphate-N-acetylneuraminic acid hydroxylase (cmah).